Consider the following 150-residue polypeptide: UPF0506 protein SJCHGC03047 (150 aa).

Positions 1 to 18 (MNTCIQLLILCLVTLTNS) are cleaved as a signal peptide. N-linked (GlcNAc...) asparagine glycans are attached at residues Asn20, Asn48, and Asn110. Cystine bridges form between Cys116-Cys130, Cys123-Cys134, and Cys129-Cys139.

This sequence belongs to the UPF0506 family.

It is found in the secreted. This is UPF0506 protein SJCHGC03047 from Schistosoma japonicum (Blood fluke).